The primary structure comprises 62 residues: UPF0434 protein FTL_1400 (62 aa).

This sequence belongs to the UPF0434 family.

The polypeptide is UPF0434 protein FTL_1400 (Francisella tularensis subsp. holarctica (strain LVS)).